The sequence spans 563 residues: Choline transporter (563 aa).

Positions 1 to 25 are disordered; it reads MSIRNDNASGGYMQPDQSSNASMHK. At 1-57 the chain is on the extracellular side; that stretch reads MSIRNDNASGGYMQPDQSSNASMHKRDLRVEEEIKPLDDMDSKGAVAADGEVHLRKS. Residues Asn7 and Asn20 are each glycosylated (N-linked (GlcNAc...) asparagine). Ser22 and Ser42 each carry phosphoserine. A helical membrane pass occupies residues 58–78; that stretch reads FSLWSILGVGFGLTNSWFGIS. The Cytoplasmic portion of the chain corresponds to 79-87; sequence TSMVAGISS. The helical transmembrane segment at 88–108 threads the bilayer; the sequence is GGPMMIVYGIIIVALISICIG. At 109 to 182 the chain is on the extracellular side; sequence TSLGELSSAY…LTHPEFIPKR (74 aa). Residues 183-203 traverse the membrane as a helical segment; the sequence is WHIFVCFELLHLFLMFFNCYG. The Cytoplasmic portion of the chain corresponds to 204–205; the sequence is KS. A helical membrane pass occupies residues 206-226; sequence LPIISSSSLYISLLSFFTITI. At 227–255 the chain is on the extracellular side; sequence TVLACSHGKFNDAKFVFATFNNETGWKNG. N-linked (GlcNAc...) asparagine glycosylation occurs at Asn248. The helical transmembrane segment at 256–276 threads the bilayer; it reads GIAFIVGLINPAWSFSCLDCA. Topologically, residues 277 to 293 are cytoplasmic; the sequence is THMAFEVEKPERVIPIA. Residues 294-314 traverse the membrane as a helical segment; sequence IMGTVAIGFVTSFCYVIAMFF. Residues 315-342 lie on the Extracellular side of the membrane; sequence SIQDLDAVLSSTTGAPILDIYNQALGNK. N-linked (GlcNAc...) asparagine glycosylation is present at Asn341. A helical membrane pass occupies residues 343 to 363; sequence SGAIFLGCLILFTSFGCVIAC. Over 364 to 398 the chain is Cytoplasmic; sequence HTWQARLCWSFARDNGLPLSRLWSQVNPHTGVPLN. Residues 399-417 form a helical membrane-spanning segment; it reads AHLMSCAWITLIGLLYLAS. At 418–426 the chain is on the extracellular side; sequence STAFQSLIT. The chain crosses the membrane as a helical span at residues 427 to 445; the sequence is GCIAFLLLSYIIPVICLLA. Over 446-465 the chain is Cytoplasmic; it reads KKRNIAHGPFWLGKFGFFSN. The chain crosses the membrane as a helical span at residues 466 to 486; it reads IVLLGWTVFSVVFFSFPPVLP. The Extracellular segment spans residues 487–491; that stretch reads VTKDN. Residues 492-512 traverse the membrane as a helical segment; that stretch reads MNYVCVVIVGYTAYSILYWKY. Residues 513–563 lie on the Cytoplasmic side of the membrane; the sequence is KGKKEFHALEESENEQAEYSNNFDTIEDSREFSVAASDVELENEHVPWGKK.

Belongs to the amino acid-polyamine-organocation (APC) superfamily. Amino acid/choline transporter (ACT) (TC 2.A.3.4) family.

The protein resides in the membrane. It catalyses the reaction choline(out) = choline(in). It carries out the reaction ethanolamine(in) = ethanolamine(out). In terms of biological role, sole choline transporter in yeast. Also transports ethanolamine. The polypeptide is Choline transporter (HNM1) (Saccharomyces cerevisiae (strain ATCC 204508 / S288c) (Baker's yeast)).